Here is a 307-residue protein sequence, read N- to C-terminus: Oligopeptide transport ATP-binding protein OppF (307 aa).

The region spanning 6–251 is the ABC transporter domain; it reads VEVKDLEISF…PIHPYTQSLL (246 aa). 42-49 contacts ATP; sequence GESGSGKT.

This sequence belongs to the ABC transporter superfamily. The complex is composed of two ATP-binding proteins (OppD and OppF), two transmembrane proteins (OppB and OppC) and a solute-binding protein (OppA).

The protein resides in the cell membrane. It carries out the reaction a [peptide](out) + ATP + H2O = a [peptide](in) + ADP + phosphate + H(+). Functionally, part of the ABC transporter complex OppABCDF involved in the uptake of oligopeptides. Probably responsible for energy coupling to the transport system. In Streptococcus pyogenes serotype M1, this protein is Oligopeptide transport ATP-binding protein OppF (oppF).